The primary structure comprises 224 residues: Response regulator protein GraR (224 aa).

Positions 2–115 (QVLLVEDDQT…VLIAKLQAIY (114 aa)) constitute a Response regulatory domain. Asp51 bears the 4-aspartylphosphate mark. A DNA-binding region (ompR/PhoB-type) is located at residues 126-224 (KRTLNWQDAL…KVGKGYMAHE (99 aa)).

In terms of processing, phosphorylated by GraS.

The protein localises to the cytoplasm. In terms of biological role, member of the two-component regulatory system GraR/GraS involved in resistance against cationic antimicrobial peptides (CAMPs). This is Response regulator protein GraR (graR) from Staphylococcus haemolyticus (strain JCSC1435).